The following is a 541-amino-acid chain: Protopine 6-monooxygenase (541 aa).

The chain crosses the membrane as a helical span at residues Leu9 to Val29. Heme is bound at residue Cys476.

It belongs to the cytochrome P450 family. Requires heme as cofactor.

Its subcellular location is the endoplasmic reticulum membrane. It catalyses the reaction protopine + reduced [NADPH--hemoprotein reductase] + O2 = 6-hydroxyprotopine + oxidized [NADPH--hemoprotein reductase] + H2O + H(+). It functions in the pathway alkaloid biosynthesis. Catalyzes the conversion of protopine and allocryptopine to dihydrosanguinarine and dihydrochelerythrine, respectively, in the biosynthesis of isoquinoline alkaloid sanguinarine. The polypeptide is Protopine 6-monooxygenase (CYP82N3) (Papaver somniferum (Opium poppy)).